A 456-amino-acid chain; its full sequence is Trigger factor (456 aa).

The 86-residue stretch at 192 to 277 (GDTVVIDFVG…IHEVKTKEVP (86 aa)) folds into the PPIase FKBP-type domain.

The protein belongs to the FKBP-type PPIase family. Tig subfamily.

It is found in the cytoplasm. The catalysed reaction is [protein]-peptidylproline (omega=180) = [protein]-peptidylproline (omega=0). Functionally, involved in protein export. Acts as a chaperone by maintaining the newly synthesized protein in an open conformation. Functions as a peptidyl-prolyl cis-trans isomerase. The protein is Trigger factor of Streptococcus pyogenes serotype M4 (strain MGAS10750).